Reading from the N-terminus, the 314-residue chain is Olfactory receptor 5G9 (314 aa).

Residues methionine 1–valine 25 are Extracellular-facing. Asparagine 5 carries N-linked (GlcNAc...) asparagine glycosylation. Residues phenylalanine 26–isoleucine 46 traverse the membrane as a helical segment. Over isoleucine 47 to arginine 54 the chain is Cytoplasmic. The chain crosses the membrane as a helical span at residues leucine 55 to serine 75. Residues valine 76–leucine 99 lie on the Extracellular side of the membrane. A disulfide bridge connects residues cysteine 97 and cysteine 189. The helical transmembrane segment at glutamine 100–tyrosine 120 threads the bilayer. Topologically, residues aspartate 121–serine 133 are cytoplasmic. A helical transmembrane segment spans residues valine 134–phenylalanine 154. The Extracellular portion of the chain corresponds to asparagine 155–lysine 196. A helical transmembrane segment spans residues leucine 197–serine 217. Residues tyrosine 218–alanine 237 lie on the Cytoplasmic side of the membrane. A helical transmembrane segment spans residues phenylalanine 238–isoleucine 258. Over tyrosine 259–asparagine 271 the chain is Extracellular. Residues lysine 272–leucine 292 traverse the membrane as a helical segment. The Cytoplasmic segment spans residues arginine 293–asparagine 314.

This sequence belongs to the G-protein coupled receptor 1 family.

The protein resides in the cell membrane. In terms of biological role, potential odorant receptor. The protein is Olfactory receptor 5G9 of Mus musculus (Mouse).